The following is a 306-amino-acid chain: Ribosomal RNA small subunit methyltransferase A (306 aa).

Positions 37, 39, 64, 85, 115, and 134 each coordinate S-adenosyl-L-methionine.

This sequence belongs to the class I-like SAM-binding methyltransferase superfamily. rRNA adenine N(6)-methyltransferase family. RsmA subfamily.

The protein localises to the cytoplasm. It catalyses the reaction adenosine(1518)/adenosine(1519) in 16S rRNA + 4 S-adenosyl-L-methionine = N(6)-dimethyladenosine(1518)/N(6)-dimethyladenosine(1519) in 16S rRNA + 4 S-adenosyl-L-homocysteine + 4 H(+). Specifically dimethylates two adjacent adenosines (A1518 and A1519) in the loop of a conserved hairpin near the 3'-end of 16S rRNA in the 30S particle. May play a critical role in biogenesis of 30S subunits. The sequence is that of Ribosomal RNA small subunit methyltransferase A from Mycobacterium leprae (strain Br4923).